We begin with the raw amino-acid sequence, 81 residues long: MQIIPESPEVDLDKLLEKVKEVIKDYGEYYKHEVEPLAFGLKSLIVYFLIPETSFNEEQFLDNIKQIEEVSDAEILMATRA.

It belongs to the EF-1-beta/EF-1-delta family.

In terms of biological role, promotes the exchange of GDP for GTP in EF-1-alpha/GDP, thus allowing the regeneration of EF-1-alpha/GTP that could then be used to form the ternary complex EF-1-alpha/GTP/AAtRNA. The polypeptide is Elongation factor 1-beta (Nanoarchaeum equitans (strain Kin4-M)).